The following is a 47-amino-acid chain: Turripeptide Ici9.1 (47 aa).

Intrachain disulfides connect cysteine 1-cysteine 31, cysteine 5-cysteine 24, and cysteine 13-cysteine 45. One can recognise a Kazal-like domain in the interval 1-47 (CLSVCSMEYWPVCGSDGKTYPNECHLTSEACMSNTDITVAHVGKCDQ).

This sequence belongs to the conopeptide P-like superfamily. Expressed by the venom duct.

It is found in the secreted. Functionally, acts as a neurotoxin by inhibiting an ion channel. May also act as a serine protease inhibitor, since it possess the kazal serine protease inhibitor signature. The chain is Turripeptide Ici9.1 from Iotyrris cingulifera (Sea snail).